Reading from the N-terminus, the 235-residue chain is uncharacterized protein (235 aa).

The protein belongs to the UreF family.

It is found in the cytoplasm. The protein resides in the nucleus. Probably facilitates nickel incorporation. This is an uncharacterized protein from Schizosaccharomyces pombe (strain 972 / ATCC 24843) (Fission yeast).